Here is a 330-residue protein sequence, read N- to C-terminus: DNA-directed RNA polymerase subunit alpha (330 aa).

The alpha N-terminal domain (alpha-NTD) stretch occupies residues 1 to 231 (MQTNLLKPKT…EQLAVFAQLE (231 aa)). Residues 250-330 (FDPILLRPVD…SWPPAGLDKR (81 aa)) form an alpha C-terminal domain (alpha-CTD) region.

It belongs to the RNA polymerase alpha chain family. As to quaternary structure, homodimer. The RNAP catalytic core consists of 2 alpha, 1 beta, 1 beta' and 1 omega subunit. When a sigma factor is associated with the core the holoenzyme is formed, which can initiate transcription.

It catalyses the reaction RNA(n) + a ribonucleoside 5'-triphosphate = RNA(n+1) + diphosphate. DNA-dependent RNA polymerase catalyzes the transcription of DNA into RNA using the four ribonucleoside triphosphates as substrates. This chain is DNA-directed RNA polymerase subunit alpha, found in Polaromonas naphthalenivorans (strain CJ2).